We begin with the raw amino-acid sequence, 240 residues long: Tetrahydromethanopterin S-methyltransferase subunit A (240 aa).

At 1-218 (MAEKREPAAG…KFHAGVHAGK (218 aa)) the chain is on the cytoplasmic side. His-85 is a binding site for 5-hydroxybenzimidazolylcob(I)amide. A helical membrane pass occupies residues 219-239 (FEGIMIGLAITLSLLGLILFG). Arg-240 is a topological domain (extracellular).

The protein belongs to the MtrA family. As to quaternary structure, the complex is composed of 8 subunits; MtrA, MtrB, MtrC, MtrD, MtrE, MtrF, MtrG and MtrH. 5-hydroxybenzimidazolylcob(I)amide is required as a cofactor.

The protein resides in the cell membrane. It catalyses the reaction 5-methyl-5,6,7,8-tetrahydromethanopterin + coenzyme M + 2 Na(+)(in) = 5,6,7,8-tetrahydromethanopterin + methyl-coenzyme M + 2 Na(+)(out). Its pathway is one-carbon metabolism; methanogenesis from CO(2); methyl-coenzyme M from 5,10-methylene-5,6,7,8-tetrahydromethanopterin: step 2/2. Its function is as follows. Part of a complex that catalyzes the formation of methyl-coenzyme M and tetrahydromethanopterin from coenzyme M and methyl-tetrahydromethanopterin. This is an energy-conserving, sodium-ion translocating step. The protein is Tetrahydromethanopterin S-methyltransferase subunit A of Methanohalophilus mahii (strain ATCC 35705 / DSM 5219 / SLP).